The sequence spans 414 residues: Alanine--glyoxylate aminotransferase (414 aa).

The N-terminal 23 residues, 1 to 23 (MFQALAKASAALGPRAAGWVRTM), are a transit peptide targeting the mitochondrion. The residue at position 231 (Lys231) is an N6-(pyridoxal phosphate)lysine. N6-acetyllysine is present on residues Lys256 and Lys334. Position 382 (Arg382) interacts with substrate.

It belongs to the class-V pyridoxal-phosphate-dependent aminotransferase family. Homodimer. Pyridoxal 5'-phosphate serves as cofactor.

It is found in the peroxisome. It localises to the mitochondrion matrix. It carries out the reaction L-serine + pyruvate = 3-hydroxypyruvate + L-alanine. The catalysed reaction is glyoxylate + L-alanine = glycine + pyruvate. Catalyzes the transamination of glyoxylate to glycine and contributes to the glyoxylate detoxification. In terms of biological role, catalyzes the transamination between L-serine and pyruvate and weakly contributes to gluconeogenesis from the L-serine metabolism. The sequence is that of Alanine--glyoxylate aminotransferase from Callithrix jacchus (White-tufted-ear marmoset).